Here is a 299-residue protein sequence, read N- to C-terminus: Probable lipid kinase YegS (299 aa).

Residues 2-133 (ANFPASLLIL…IDMARVNDKT (132 aa)) enclose the DAGKc domain. ATP is bound by residues threonine 40, 66 to 72 (GDGTINE), and threonine 95. Residues leucine 215, aspartate 218, and leucine 220 each contribute to the Mg(2+) site. The active-site Proton acceptor is the glutamate 271.

The protein belongs to the diacylglycerol/lipid kinase family. YegS lipid kinase subfamily. The cofactor is Mg(2+). Ca(2+) serves as cofactor.

It is found in the cytoplasm. Functionally, probably phosphorylates lipids; the in vivo substrate is unknown. The chain is Probable lipid kinase YegS from Salmonella heidelberg (strain SL476).